Reading from the N-terminus, the 267-residue chain is Heme-containing CO-sensing transcriptional regulator RcoM 2 (267 aa).

Residues 15-86 (RAETFQHKLE…KSRDKLRFLL (72 aa)) form the PAS domain. Residues His-74 and Met-104 each coordinate heme. Positions 161–266 (IPVYRKSRVI…TAQLKELLGV (106 aa)) constitute an HTH LytTR-type domain.

The cofactor is heme.

The protein resides in the cytoplasm. In terms of biological role, one-component, b-type heme-containing aerobic sensor and transcriptional regulator that responds to CO by activating the expression of the oxidation operon cox. The sequence is that of Heme-containing CO-sensing transcriptional regulator RcoM 2 (rcoM2) from Paraburkholderia xenovorans (strain LB400).